The chain runs to 216 residues: Refilin-B (216 aa).

The segment at Met-1–Val-55 is disordered. Phosphoserine occurs at positions 6 and 26.

The protein belongs to the Refilin family. Interacts with FLNA and FLNB. In terms of tissue distribution, detected in various tissues, with highest expression in lung, followed by spleen.

The protein localises to the cytoplasm. It localises to the cytoskeleton. In terms of biological role, involved in the regulation of the perinuclear actin network and nuclear shape through interaction with filamins. Plays an essential role in the formation of cartilaginous skeletal elements. This Mus musculus (Mouse) protein is Refilin-B.